Reading from the N-terminus, the 279-residue chain is uncharacterized protein (279 aa).

Positions 1-77 (MGILEQLENP…VTLAKEISNK (77 aa)) constitute an HTH rpiR-type domain. The segment at residues 37 to 56 (ISIIAKESGVGEATITRFTK) is a DNA-binding region (H-T-H motif). An SIS domain is found at 123–263 (CRDLIMNAKR…YTEVIKEMFS (141 aa)).

This is an uncharacterized protein from Clostridium perfringens (strain 13 / Type A).